The following is a 200-amino-acid chain: LexA repressor (200 aa).

Residues 28–48 (RAEIAEILGFKSANAAEEHLK) constitute a DNA-binding region (H-T-H motif). Catalysis depends on for autocatalytic cleavage activity residues serine 118 and lysine 155.

It belongs to the peptidase S24 family. In terms of assembly, homodimer.

The enzyme catalyses Hydrolysis of Ala-|-Gly bond in repressor LexA.. Functionally, represses a number of genes involved in the response to DNA damage (SOS response), including recA and lexA. In the presence of single-stranded DNA, RecA interacts with LexA causing an autocatalytic cleavage which disrupts the DNA-binding part of LexA, leading to derepression of the SOS regulon and eventually DNA repair. This Teredinibacter turnerae (strain ATCC 39867 / T7901) protein is LexA repressor.